A 143-amino-acid polypeptide reads, in one-letter code: Transcriptional regulator MraZ (143 aa).

2 consecutive SpoVT-AbrB domains span residues 5–47 (TYAP…SQRE) and 76–119 (ASAE…DAEA).

The protein belongs to the MraZ family. In terms of assembly, forms oligomers.

Its subcellular location is the cytoplasm. The protein localises to the nucleoid. The polypeptide is Transcriptional regulator MraZ (Leifsonia xyli subsp. xyli (strain CTCB07)).